The following is a 251-amino-acid chain: tRNA (guanine-N(1)-)-methyltransferase (251 aa).

Residues Gly117 and Ile137–Leu142 each bind S-adenosyl-L-methionine.

The protein belongs to the RNA methyltransferase TrmD family. Homodimer.

It localises to the cytoplasm. The catalysed reaction is guanosine(37) in tRNA + S-adenosyl-L-methionine = N(1)-methylguanosine(37) in tRNA + S-adenosyl-L-homocysteine + H(+). In terms of biological role, specifically methylates guanosine-37 in various tRNAs. The polypeptide is tRNA (guanine-N(1)-)-methyltransferase (Actinobacillus pleuropneumoniae serotype 5b (strain L20)).